The sequence spans 511 residues: Histidine ammonia-lyase (511 aa).

The 5-imidazolinone (Ala-Gly) cross-link spans 142–144 (ASG). S143 carries the post-translational modification 2,3-didehydroalanine (Ser).

The protein belongs to the PAL/histidase family. Post-translationally, contains an active site 4-methylidene-imidazol-5-one (MIO), which is formed autocatalytically by cyclization and dehydration of residues Ala-Ser-Gly.

The protein localises to the cytoplasm. It catalyses the reaction L-histidine = trans-urocanate + NH4(+). The protein operates within amino-acid degradation; L-histidine degradation into L-glutamate; N-formimidoyl-L-glutamate from L-histidine: step 1/3. This is Histidine ammonia-lyase from Phenylobacterium zucineum (strain HLK1).